Consider the following 186-residue polypeptide: Peptidyl-tRNA hydrolase (186 aa).

Tyr-14 is a binding site for tRNA. The active-site Proton acceptor is the His-19. The tRNA site is built by Tyr-64, Asn-66, and Asn-113.

The protein belongs to the PTH family. In terms of assembly, monomer.

The protein resides in the cytoplasm. The enzyme catalyses an N-acyl-L-alpha-aminoacyl-tRNA + H2O = an N-acyl-L-amino acid + a tRNA + H(+). Hydrolyzes ribosome-free peptidyl-tRNAs (with 1 or more amino acids incorporated), which drop off the ribosome during protein synthesis, or as a result of ribosome stalling. Its function is as follows. Catalyzes the release of premature peptidyl moieties from peptidyl-tRNA molecules trapped in stalled 50S ribosomal subunits, and thus maintains levels of free tRNAs and 50S ribosomes. This Agathobacter rectalis (strain ATCC 33656 / DSM 3377 / JCM 17463 / KCTC 5835 / VPI 0990) (Eubacterium rectale) protein is Peptidyl-tRNA hydrolase.